The following is a 165-amino-acid chain: uncharacterized protein (165 aa).

Residues 1-38 (MFTVKEKNRQELEEELNDLEFQIYRMQENMKDLSKDAK) are a coiled coil.

This is an uncharacterized protein from Bacillus subtilis (strain 168).